Reading from the N-terminus, the 570-residue chain is Mitoguardin 1 (570 aa).

Residues 34–54 (GLKKIIAVAAISGVSLIFLAC) traverse the membrane as a helical segment.

The protein belongs to the mitoguardin family. As to quaternary structure, homodimer and heterodimer; forms heterodimers with miga2.

It localises to the mitochondrion outer membrane. Regulator of mitochondrial fusion: acts by forming homo- and heterodimers at the mitochondrial outer membrane and facilitating the formation of pld6/MitoPLD dimers. May act by regulating phospholipid metabolism via pld6/MitoPLD. The chain is Mitoguardin 1 from Xenopus laevis (African clawed frog).